The following is a 166-amino-acid chain: Protein SprT (166 aa).

The SprT-like domain maps to 19-164 (RDALARANLK…CVRCGDTLVA (146 aa)). Position 78 (His-78) interacts with Zn(2+). The active site involves Glu-79. His-82 provides a ligand contact to Zn(2+).

It belongs to the SprT family. It depends on Zn(2+) as a cofactor.

It localises to the cytoplasm. This Cronobacter sakazakii (strain ATCC BAA-894) (Enterobacter sakazakii) protein is Protein SprT.